The primary structure comprises 245 residues: Fibroblast growth factor 13 (245 aa).

2 disordered regions span residues 1–37 and 213–245; these read MAAA…SKGN and TEFS…NDST. A mediates targeting to the nucleus region spans residues 1-62; sequence MAAAIASSLI…GSKKRRRRRP (62 aa). The segment covering 215–245 has biased composition (polar residues); it reads FSRSGSGTPTKSRSVSGVLNGGKSMSQNDST.

The protein belongs to the heparin-binding growth factors family.

It localises to the cell projection. Its subcellular location is the filopodium. It is found in the growth cone. The protein resides in the dendrite. The protein localises to the cell membrane. It localises to the sarcolemma. Its subcellular location is the cytoplasm. Functionally, microtubule-binding protein which directly binds tubulin and is involved in both polymerization and stabilization of microtubules. Through its action on microtubules, may participate in the refinement of axons by negatively regulating axonal and leading processes branching. Plays a crucial role in neuron polarization and migration. Regulates voltage-gated sodium channel transport and function. Required for proper head development, it is involved in neural differentiation through regulation of the mek5-erk5 pathway. The polypeptide is Fibroblast growth factor 13 (fgf13) (Xenopus laevis (African clawed frog)).